Here is a 1004-residue protein sequence, read N- to C-terminus: UPF0182 protein Mflv_4654 (1004 aa).

Helical transmembrane passes span 18–38 (FLIAVSAVLVLLLLLGPRFID), 63–83 (LVIFFVVAILVGAVVFAGLAL), 114–134 (LIGIGVPLAIGVLAGFVGQSY), 176–196 (FVGVFLAFLANLLGHYLFGGI), 211–231 (IQLITLVGLLMLLKAVAYWFD), 260–280 (KLILMAIAVICAVAVFSAIFL), and 288–308 (IGVVLLLLSSLVVGAGWPLVV). Residues 896–940 (PGADATATGPAATEPPAGQAPQTQGNNTAPPAAQPPNRQGQAPAG) show a composition bias toward low complexity. A disordered region spans residues 896-960 (PGADATATGP…TGPTQLSAAK (65 aa)).

This sequence belongs to the UPF0182 family.

It localises to the cell membrane. This is UPF0182 protein Mflv_4654 from Mycolicibacterium gilvum (strain PYR-GCK) (Mycobacterium gilvum (strain PYR-GCK)).